The primary structure comprises 305 residues: Glycerol-3-phosphate dehydrogenase [NAD(P)+] (305 aa).

NADPH contacts are provided by W11, R31, and K79. K79 and G107 together coordinate sn-glycerol 3-phosphate. Residue A111 coordinates NADPH. Residues K162, D215, S225, R226, and N227 each contribute to the sn-glycerol 3-phosphate site. K162 (proton acceptor) is an active-site residue. R226 lines the NADPH pocket. E252 is a binding site for NADPH.

It belongs to the NAD-dependent glycerol-3-phosphate dehydrogenase family.

The protein localises to the cytoplasm. It catalyses the reaction sn-glycerol 3-phosphate + NAD(+) = dihydroxyacetone phosphate + NADH + H(+). It carries out the reaction sn-glycerol 3-phosphate + NADP(+) = dihydroxyacetone phosphate + NADPH + H(+). It participates in membrane lipid metabolism; glycerophospholipid metabolism. Its function is as follows. Catalyzes the reduction of the glycolytic intermediate dihydroxyacetone phosphate (DHAP) to sn-glycerol 3-phosphate (G3P), the key precursor for phospholipid synthesis. In Gloeobacter violaceus (strain ATCC 29082 / PCC 7421), this protein is Glycerol-3-phosphate dehydrogenase [NAD(P)+].